Reading from the N-terminus, the 1284-residue chain is Neurexin-4 (1284 aa).

An N-terminal signal peptide occupies residues 1-35; sequence MRPPRSNTKAAFSSLQFGLLCLLLLVNNGIKSVQA. At 36–1217 the chain is on the extracellular side; it reads DAFTDYFSDY…LRKAYNEVDS (1182 aa). In terms of domain architecture, F5/8 type C spans 47 to 185; the sequence is CNQPLMERAV…ISMRVELYGC (139 aa). An intrachain disulfide couples Cys-47 to Cys-185. 4 N-linked (GlcNAc...) asparagine glycosylation sites follow: Asn-195, Asn-329, Asn-340, and Asn-398. The region spanning 220 to 369 is the Laminin G-like 1 domain; the sequence is FKTAFANGVM…FTRVNTIYAC (150 aa). The cysteines at positions 333 and 369 are disulfide-linked. The region spanning 403-540 is the Laminin G-like 2 domain; the sequence is FRTYEETGVM…CGDDVVVDAC (138 aa). Disulfide bonds link Cys-507–Cys-540, Cys-546–Cys-557, Cys-551–Cys-566, and Cys-568–Cys-578. An EGF-like 1 domain is found at 542 to 579; sequence MIDRCNPNPCQHKGLCHQNSREFFCDCGHTGYAGAVCH. A glycan (N-linked (GlcNAc...) asparagine) is linked at Asn-668. The 139-residue stretch at 824–962 folds into the Laminin G-like 3 domain; that stretch reads FRTTQENSVI…RGLYGISTGC (139 aa). Intrachain disulfides connect Cys-934–Cys-962, Cys-966–Cys-977, Cys-971–Cys-986, and Cys-988–Cys-998. The region spanning 962–999 is the EGF-like 2 domain; sequence CVGRCESNPCLNNGTCIERYDGYSCDCRWSAFKGPICA. N-linked (GlcNAc...) asparagine glycosylation is present at Asn-974. Residues 1032 to 1183 form the Laminin G-like 4 domain; it reads FTTTIPKGFL…LGTQLTEDFC (152 aa). Asn-1047 and Asn-1137 each carry an N-linked (GlcNAc...) asparagine glycan. Cys-1147 and Cys-1183 form a disulfide bridge. Residues 1218 to 1238 traverse the membrane as a helical segment; the sequence is VLLACLLVILFLLLILMFFLI. At 1239-1284 the chain is on the cytoplasmic side; it reads GRYLHRHKGDYLTHEDQGADGADDPDDAVLHSTTGHQVRKRTEIFI.

This sequence belongs to the neurexin family. In terms of assembly, forms a complex with Nrg and Cont. Forms a complex composed of septa junction proteins Nrx-IV/Nrx, Tsf2/MTf, Cont and Nrg during late embryogenesis. The C-terminal region interacts with coracle. Interacts with Patj in cis form. In terms of tissue distribution, found in septate junctions of epithelial and glial cells.

The protein localises to the cell membrane. Its subcellular location is the cell junction. It localises to the septate junction. Seems to play a role in the formation and function of septate junctions. Septate junctions, which are the equivalent of vertebrates tight junctions, are characterized by regular arrays of transverse structures that span the intermembrane space and form a physical barrier to diffusion. Required for the blood-brain barrier formation. The chain is Neurexin-4 (Nrx-IV) from Drosophila melanogaster (Fruit fly).